The chain runs to 580 residues: Rap guanine nucleotide exchange factor 5 (580 aa).

The N-terminal Ras-GEF domain maps to 68-201 (DRYVVVSGTP…ELKEFQKILG (134 aa)). A Ras-GEF domain is found at 345 to 579 (NTWDLALELM…FELSHRIEPR (235 aa)).

As to expression, widely expressed with highest levels in brain.

Its subcellular location is the nucleus. Functionally, guanine nucleotide exchange factor (GEF) for RAP1A, RAP2A and MRAS/M-Ras-GTP. Its association with MRAS inhibits Rap1 activation. The protein is Rap guanine nucleotide exchange factor 5 (RAPGEF5) of Homo sapiens (Human).